Consider the following 156-residue polypeptide: Hexachlorocyclohexane dehydrochlorinase 2 (156 aa).

D25 is an active-site residue. The Proton acceptor role is filled by H73.

Belongs to the HCH dehydrochlorinase family. In terms of assembly, homotrimer.

It is found in the periplasm. The catalysed reaction is gamma-hexachlorocyclohexane = (3R,4S,5S,6R)-pentachlorocyclohexene + chloride + H(+). The enzyme catalyses (3R,4S,5S,6R)-pentachlorocyclohexene = (3R,6R)-1,3,4,6-tetrachlorocyclohexa-1,4-diene + chloride + H(+). Its pathway is xenobiotic degradation; hexachlorocyclohexane degradation. In terms of biological role, catalyzes the conversion of the important environmental pollutant gamma-hexachlorocyclohexane (gamma-HCH or lindane) to 1,3,4,6-tetrachloro-1,4-cyclohexadiene (1,4-TCDN) via gamma-pentachlorocyclohexene (gamma-PCCH). Proceeds by two successive 1,2-anti conformationally dependent dehydrochlorinations. Also shows activity with alpha- and delta-HCH, giving alpha- and delta-PCCH respectively, but not with the beta isomer. The sequence is that of Hexachlorocyclohexane dehydrochlorinase 2 from Sphingobium indicum (strain DSM 16412 / CCM 7286 / MTCC 6364 / B90A).